The chain runs to 345 residues: Serine proteinase inhibitor 2 (345 aa).

It belongs to the serpin family. Poxviruses subfamily.

It localises to the host cytoplasm. Its function is as follows. Viral serpin that inhibits both cysteine and serine proteinases involved in the regulation of host inflammatory and apoptosis processes. Major anti-apoptotic protein which inhibits both intrinsic and extrinsic pathways and strongly cleaves host CASP1 and CASP8 but is a rather poor inhibitor of host CASP3. Prevents the proteolytic activity of host interleukin-1-beta converting enzyme (ICE) and ICE-like enzymes. Can also block apoptosis through host tumor necrosis factor (TNF) receptor. The inhibition of host ICE is an example of a 'cross-class' interaction, in which a serpin inhibits a non-serine proteinase. Also inhibits granzyme B. The chain is Serine proteinase inhibitor 2 (OPG199) from Rabbitpox virus (strain Utrecht) (RPV).